The following is a 2479-amino-acid chain: Centrosomal protein of 290 kDa (2479 aa).

A self-association (with itself or C-terminus) region spans residues 1–695 (MPPNINWKEI…IESKNAEGIF (695 aa)). Coiled-coil stretches lie at residues 59-565 (MKMK…ERGK), 598-664 (SLKN…MQKD), 697-931 (ASLH…VCEK), 958-1027 (SLSE…IEQA), 1071-1498 (QRAE…ILSR), 1533-1584 (HTLK…LHIL), and 1635-2452 (DSLS…SEQL). Residues 149–163 (ALRNEEAENENSKLR) are compositionally biased toward basic and acidic residues. The segment at 149–168 (ALRNEEAENENSKLRRENKR) is disordered. The interaction with IQCB1 stretch occupies residues 696 to 896 (DASLHLKAQV…TVLQVNEKSL (201 aa)). Positions 1966–2479 (TTGMTVDQVL…EESPVNFPIY (514 aa)) are self-association (with itself or N-terminus). A disordered region spans residues 2458-2479 (SPVAASEEFEDEEESPVNFPIY).

In terms of assembly, part of the tectonic-like complex (also named B9 complex). Interacts with ATF4 via its N-terminal region. Associates with the BBSome complex, interacting (via N-terminus) with BBS4. Interacts with IQCB1/NPHP5; IQCB1 and CEP290/NPHP6 are proposed to form a functional NPHP5-6 module localized to the centrosome. Interacts with NPHP4; the interaction likely requires additional interactors. Interacts with ZNF423, FAM161A, CEP162, CEP162, CEP131, TALPID3, CCDC13, CC2D2A, RPGRIP1. Can self-associate (homo- or heteromeric). Interacts with CCP110; required for suppressing cilia formation. Interacts with RPGR. Associates (via C-terminus) with microtubules; association to microtubule is reduced in response to cellular stress, such as ultraviolet light (UV) radiation or heat shock, in a process that requires p38 MAP kinase signaling. Interacts with FAM161A. Interacts with PCM1. Interacts with CCDC66. Interacts with ARMC9 and CSPP1. Post-translationally, ubiquitinated. May undergo monoubiquitination; monoubiquitination is inhibited in response to cellular stress, such as ultraviolet light (UV) radiation or heat shock, but does not cause its displacement from centriolar satellites. In terms of tissue distribution, ubiquitous. Expressed strongly in placenta and weakly in brain.

The protein resides in the cytoplasm. The protein localises to the cytoskeleton. It is found in the microtubule organizing center. Its subcellular location is the centrosome. It localises to the centriolar satellite. The protein resides in the nucleus. The protein localises to the cell projection. It is found in the cilium. Its subcellular location is the cilium basal body. It localises to the centriole. The protein resides in the cytoplasmic vesicle. Functionally, involved in early and late steps in cilia formation. Its association with CCP110 is required for inhibition of primary cilia formation by CCP110. May play a role in early ciliogenesis in the disappearance of centriolar satellites and in the transition of primary ciliar vesicles (PCVs) to capped ciliary vesicles (CCVs). Required for the centrosomal recruitment of RAB8A and for the targeting of centriole satellite proteins to centrosomes such as of PCM1. Required for the correct localization of ciliary and phototransduction proteins in retinal photoreceptor cells; may play a role in ciliary transport processes. Required for efficient recruitment of RAB8A to primary cilium. In the ciliary transition zone is part of the tectonic-like complex which is required for tissue-specific ciliogenesis and may regulate ciliary membrane composition. Involved in regulation of the BBSome complex integrity, specifically for presence of BBS2, BBS5 and BBS8/TTC8 in the complex, and in ciliary targeting of selected BBSome cargos. May play a role in controlling entry of the BBSome complex to cilia possibly implicating IQCB1/NPHP5. Activates ATF4-mediated transcription. The chain is Centrosomal protein of 290 kDa (CEP290) from Homo sapiens (Human).